A 478-amino-acid polypeptide reads, in one-letter code: UDP-N-acetylmuramate--L-alanine ligase (478 aa).

ATP is bound at residue 120–126; that stretch reads GSHGKTT.

It belongs to the MurCDEF family.

The protein localises to the cytoplasm. The enzyme catalyses UDP-N-acetyl-alpha-D-muramate + L-alanine + ATP = UDP-N-acetyl-alpha-D-muramoyl-L-alanine + ADP + phosphate + H(+). It functions in the pathway cell wall biogenesis; peptidoglycan biosynthesis. Functionally, cell wall formation. The protein is UDP-N-acetylmuramate--L-alanine ligase of Rickettsia felis (strain ATCC VR-1525 / URRWXCal2) (Rickettsia azadi).